The primary structure comprises 99 residues: UPF0473 protein SMU_2077c (99 aa).

This sequence belongs to the UPF0473 family.

The protein is UPF0473 protein SMU_2077c of Streptococcus mutans serotype c (strain ATCC 700610 / UA159).